The chain runs to 373 residues: Cytoplasmic tRNA 2-thiolation protein 1 (373 aa).

It belongs to the TtcA family. CTU1/NCS6/ATPBD3 subfamily.

It localises to the cytoplasm. It functions in the pathway tRNA modification; 5-methoxycarbonylmethyl-2-thiouridine-tRNA biosynthesis. Functionally, plays a central role in 2-thiolation of mcm(5)S(2)U at tRNA wobble positions of tRNA(Lys), tRNA(Glu) and tRNA(Gln). Directly binds tRNAs and probably acts by catalyzing adenylation of tRNAs, an intermediate required for 2-thiolation. It is unclear whether it acts as a sulfurtransferase that transfers sulfur from thiocarboxylated URM1 onto the uridine of tRNAs at wobble position. This chain is Cytoplasmic tRNA 2-thiolation protein 1, found in Caenorhabditis elegans.